The following is a 233-amino-acid chain: ATP-dependent Clp protease proteolytic subunit 1 (233 aa).

Residue Ser-116 is the Nucleophile of the active site. Residue His-141 is part of the active site.

This sequence belongs to the peptidase S14 family. As to quaternary structure, fourteen ClpP subunits assemble into 2 heptameric rings which stack back to back to give a disk-like structure with a central cavity, resembling the structure of eukaryotic proteasomes.

It is found in the cytoplasm. It carries out the reaction Hydrolysis of proteins to small peptides in the presence of ATP and magnesium. alpha-casein is the usual test substrate. In the absence of ATP, only oligopeptides shorter than five residues are hydrolyzed (such as succinyl-Leu-Tyr-|-NHMec, and Leu-Tyr-Leu-|-Tyr-Trp, in which cleavage of the -Tyr-|-Leu- and -Tyr-|-Trp bonds also occurs).. In terms of biological role, cleaves peptides in various proteins in a process that requires ATP hydrolysis. Has a chymotrypsin-like activity. Plays a major role in the degradation of misfolded proteins. The protein is ATP-dependent Clp protease proteolytic subunit 1 of Salinibacter ruber (strain DSM 13855 / M31).